The primary structure comprises 257 residues: Deoxyribose-phosphate aldolase (257 aa).

Catalysis depends on D102, which acts as the Proton donor/acceptor. Catalysis depends on K166, which acts as the Schiff-base intermediate with acetaldehyde. K198 functions as the Proton donor/acceptor in the catalytic mechanism.

This sequence belongs to the DeoC/FbaB aldolase family. DeoC type 2 subfamily.

The protein resides in the cytoplasm. It catalyses the reaction 2-deoxy-D-ribose 5-phosphate = D-glyceraldehyde 3-phosphate + acetaldehyde. Its pathway is carbohydrate degradation; 2-deoxy-D-ribose 1-phosphate degradation; D-glyceraldehyde 3-phosphate and acetaldehyde from 2-deoxy-alpha-D-ribose 1-phosphate: step 2/2. Catalyzes a reversible aldol reaction between acetaldehyde and D-glyceraldehyde 3-phosphate to generate 2-deoxy-D-ribose 5-phosphate. This chain is Deoxyribose-phosphate aldolase, found in Shewanella amazonensis (strain ATCC BAA-1098 / SB2B).